A 232-amino-acid polypeptide reads, in one-letter code: Pseudaminic acid cytidylyltransferase (232 aa).

This sequence belongs to the CMP-NeuNAc synthase family. Mg(2+) serves as cofactor.

The enzyme catalyses pseudaminate + CTP = CMP-pseudaminate + diphosphate. Functionally, catalyzes the final step in the biosynthesis of pseudaminic acid, a sialic-acid-like sugar that is used to modify flagellin. Mediates the activation of pseudaminic acid with CMP by forming CMP-pseudaminic acid. This is Pseudaminic acid cytidylyltransferase (pseF) from Campylobacter jejuni subsp. jejuni serotype O:23/36 (strain 81-176).